A 64-amino-acid chain; its full sequence is Large ribosomal subunit protein bL33 (64 aa).

Belongs to the bacterial ribosomal protein bL33 family.

The polypeptide is Large ribosomal subunit protein bL33 (Nostoc punctiforme (strain ATCC 29133 / PCC 73102)).